We begin with the raw amino-acid sequence, 397 residues long: Mannonate dehydratase (397 aa).

The protein belongs to the mannonate dehydratase family. It depends on Fe(2+) as a cofactor. The cofactor is Mn(2+).

It catalyses the reaction D-mannonate = 2-dehydro-3-deoxy-D-gluconate + H2O. It participates in carbohydrate metabolism; pentose and glucuronate interconversion. Its function is as follows. Catalyzes the dehydration of D-mannonate. In Yersinia pseudotuberculosis serotype O:1b (strain IP 31758), this protein is Mannonate dehydratase.